A 389-amino-acid polypeptide reads, in one-letter code: Coproporphyrin III ferrochelatase (389 aa).

Residues Ser70 and Tyr139 each coordinate Fe-coproporphyrin III. His205 provides a ligand contact to Fe(2+). The segment at 207-229 is disordered; that stretch reads IPSTDAGKSGPSGRPDSGEPWGE. Fe(2+) is bound at residue Glu303.

The protein belongs to the ferrochelatase family.

Its subcellular location is the cytoplasm. The enzyme catalyses Fe-coproporphyrin III + 2 H(+) = coproporphyrin III + Fe(2+). Its pathway is porphyrin-containing compound metabolism; protoheme biosynthesis. Involved in coproporphyrin-dependent heme b biosynthesis. Catalyzes the insertion of ferrous iron into coproporphyrin III to form Fe-coproporphyrin III. This chain is Coproporphyrin III ferrochelatase, found in Leifsonia xyli subsp. xyli (strain CTCB07).